The sequence spans 446 residues: WD repeat domain phosphoinositide-interacting protein 1 (446 aa).

WD repeat units follow at residues 3–42, 47–88, 92–126, 131–173, 177–216, 222–261, and 304–343; these read AEAA…LFSL, QLDQ…VYHF, TEIC…IHNI, LLKT…LYDG, KTVC…VFSV, LYEF…IFKL, and FATA…MYNL. Positions 131 to 136 match the Nuclear receptor interaction motif; sequence LLKTLL. Residues 225-228 carry the L/FRRG motif motif; that stretch reads FRRG. The segment at 386-406 is disordered; it reads ARPSASSASTVPGYSEDGGAL.

The protein belongs to the WD repeat PROPPIN family. As to quaternary structure, interacts with androgen receptor (AR) and the estrogen receptors ESR1 and ESR2. Interacts with WIPI2. Interacts with WDR45. Interacts with ATG16L1. May interact with NUDC. As to expression, ubiquitously expressed. Highly expressed in skeletal muscle, heart, testis, pancreas and placenta. Highly expressed in G361, Sk-mel-28, Sk-mel-13, WM852 and WM451 cells. Up-regulated in a variety of tumor tissues.

The protein localises to the golgi apparatus. Its subcellular location is the trans-Golgi network. It localises to the endosome. The protein resides in the cytoplasmic vesicle. It is found in the clathrin-coated vesicle. The protein localises to the preautophagosomal structure membrane. Its subcellular location is the cytoplasm. It localises to the cytoskeleton. In terms of biological role, component of the autophagy machinery that controls the major intracellular degradation process by which cytoplasmic materials are packaged into autophagosomes and delivered to lysosomes for degradation. Plays an important role in starvation- and calcium-mediated autophagy, as well as in mitophagy. Functions downstream of the ULK1 and PI3-kinases that produce phosphatidylinositol 3-phosphate (PtdIns3P) on membranes of the endoplasmic reticulum once activated. Binds phosphatidylinositol 3-phosphate (PtdIns3P), and maybe other phosphoinositides including PtdIns3,5P2 and PtdIns5P, and is recruited to phagophore assembly sites at the endoplasmic reticulum membranes. There, it assists WIPI2 in the recruitment of ATG12-ATG5-ATG16L1, a complex that directly controls the elongation of the nascent autophagosomal membrane. Together with WDR45/WIPI4, promotes ATG2 (ATG2A or ATG2B)-mediated lipid transfer by enhancing ATG2-association with phosphatidylinositol 3-monophosphate (PI3P)-containing membranes. Involved in xenophagy of Staphylococcus aureus. Invading S.aureus cells become entrapped in autophagosome-like WIPI1 positive vesicles targeted for lysosomal degradation. Also plays a distinct role in controlling the transcription of melanogenic enzymes and melanosome maturation, a process that is distinct from starvation-induced autophagy. May also regulate the trafficking of proteins involved in the mannose-6-phosphate receptor (MPR) recycling pathway. This is WD repeat domain phosphoinositide-interacting protein 1 (WIPI1) from Homo sapiens (Human).